The following is a 450-amino-acid chain: tRNA modification GTPase MnmE (450 aa).

(6S)-5-formyl-5,6,7,8-tetrahydrofolate contacts are provided by Arg26, Glu84, and Lys123. The TrmE-type G domain occupies 219–376; the sequence is GMHVVLVGQP…LKAKLLEMIG (158 aa). Asn229 contributes to the K(+) binding site. Residues 229–234, 248–254, 273–276, and 357–359 contribute to the GTP site; these read NVGKSS, TDIAGTT, DTAG, and SAR. Mg(2+) is bound at residue Ser233. Thr248, Ile250, and Thr253 together coordinate K(+). Thr254 lines the Mg(2+) pocket. Lys450 contributes to the (6S)-5-formyl-5,6,7,8-tetrahydrofolate binding site.

It belongs to the TRAFAC class TrmE-Era-EngA-EngB-Septin-like GTPase superfamily. TrmE GTPase family. Homodimer. Heterotetramer of two MnmE and two MnmG subunits. Requires K(+) as cofactor.

The protein resides in the cytoplasm. Exhibits a very high intrinsic GTPase hydrolysis rate. Involved in the addition of a carboxymethylaminomethyl (cmnm) group at the wobble position (U34) of certain tRNAs, forming tRNA-cmnm(5)s(2)U34. This chain is tRNA modification GTPase MnmE, found in Chromobacterium violaceum (strain ATCC 12472 / DSM 30191 / JCM 1249 / CCUG 213 / NBRC 12614 / NCIMB 9131 / NCTC 9757 / MK).